A 462-amino-acid polypeptide reads, in one-letter code: Cysteine--tRNA ligase (462 aa).

Residue Cys28 coordinates Zn(2+). A 'HIGH' region motif is present at residues 30–40 (MTVYDYCHIGH). Zn(2+) contacts are provided by Cys209, His234, and Glu238. The short motif at 266–270 (KMSKS) is the 'KMSKS' region element. Lys269 serves as a coordination point for ATP.

The protein belongs to the class-I aminoacyl-tRNA synthetase family. Monomer. The cofactor is Zn(2+).

It is found in the cytoplasm. It carries out the reaction tRNA(Cys) + L-cysteine + ATP = L-cysteinyl-tRNA(Cys) + AMP + diphosphate. The chain is Cysteine--tRNA ligase from Pseudomonas fluorescens (strain SBW25).